The sequence spans 462 residues: MPSPEHPSWLSTLLADTRPPPKLFAWSPANLDSPTAVKPDRADRGDFDPGKYPVDAPITTASEPVKRIYIVGPGNVGRLYASYMSRQRDALPITLVVHRKELLSQWVTSEGVVLADRGGKVTKNKQFDVEWWTESRPRYGPVREVADGEKLHNVFISTKADAGLGEADRLRRYLGRCSSVVFAQNGVSKLWAPYGPLYVASRYHADDAPSFSACVVNHGISAAGLFYSIHTSPSDAFIGPIFKGSAAPAHGQNKRRRLDDDFFTTYISSTPFLDTKHVSSGQLWIIQLEKLVLNAAINPLTTLLRCKTGQLFASYDSHDALTRVLDQLLWQASAVIQALINHDANIDMLTSYAETVHRLVPGSDDYGRNFANIRRKLTVRFSQPILKAKLYAFGLNIREHRSSMLQDAEAGRKTEIRDVNGWIVDMAEYLGLDLDVGIHRGLIELIEECVVLDKEELARRLL.

The disordered stretch occupies residues 34–55 (PTAVKPDRADRGDFDPGKYPVD). The span at 38 to 49 (KPDRADRGDFDP) shows a compositional bias: basic and acidic residues. 72-77 (GPGNVG) contributes to the NADP(+) binding site. A Calmoduling-binding motif is present at residues 167–184 (ADRLRRYLGRCSSVVFAQ). Catalysis depends on Lys290, which acts as the Proton donor. Substrate-binding residues include Asn294, Asn298, and Ser403. Glu415 contributes to the NADP(+) binding site.

This sequence belongs to the ketopantoate reductase family. Homodimer. Binds to calmodulin in a calcium-independent manner.

The catalysed reaction is (R)-2-hydroxy-3-methylbutanoate + NADP(+) = 3-methyl-2-oxobutanoate + NADPH + H(+). With respect to regulation, environmental stimuli such as light and salt stress suppress activity through stimulation of calmodulin (CaM) that binds BEA2 and probably impairs its dimerization. Its function is as follows. Ketoisovalerate reductase; part of the gene cluster that mediates the biosynthesis of beauvericin (BEA), a non-ribosomal cyclic hexadepsipeptide that shows antibiotic, antifungal, insecticidal, and cancer cell antiproliferative and antihaptotactic activity. Ketoisovalerate reductase BEA2 catalyzes the NADPH-specific reduction of ketoisovaleric acid to hydroxyisovalerate, a precursor for beauvericin biosynthesis. The nonribosomal cyclodepsipeptide synthetase BEA1 then catalyzes the formation of beauvericin via condensation and cyclization of 3 dipeptidol monomers, each composed of one unit of hydroxyisovalerate and one unit of N-methyl-phenylalanine. The chain is Ketoisovalerate reductase from Beauveria bassiana (White muscardine disease fungus).